Consider the following 513-residue polypeptide: 2-isopropylmalate synthase (513 aa).

A Pyruvate carboxyltransferase domain is found at Ile4 to Met266. Positions 13, 201, 203, and 237 each coordinate Mn(2+). The segment at Ile390–Ile513 is regulatory domain.

Belongs to the alpha-IPM synthase/homocitrate synthase family. LeuA type 1 subfamily. Homodimer. It depends on Mn(2+) as a cofactor.

The protein localises to the cytoplasm. The catalysed reaction is 3-methyl-2-oxobutanoate + acetyl-CoA + H2O = (2S)-2-isopropylmalate + CoA + H(+). It participates in amino-acid biosynthesis; L-leucine biosynthesis; L-leucine from 3-methyl-2-oxobutanoate: step 1/4. Its function is as follows. Catalyzes the condensation of the acetyl group of acetyl-CoA with 3-methyl-2-oxobutanoate (2-ketoisovalerate) to form 3-carboxy-3-hydroxy-4-methylpentanoate (2-isopropylmalate). In Lactococcus lactis subsp. cremoris (strain SK11), this protein is 2-isopropylmalate synthase.